Reading from the N-terminus, the 214-residue chain is Large ribosomal subunit protein uL3 (214 aa).

The disordered stretch occupies residues 133-153; it reads GRATHGNSRSHNVPGSIGMAQ. Gln-153 carries the N5-methylglutamine modification.

It belongs to the universal ribosomal protein uL3 family. In terms of assembly, part of the 50S ribosomal subunit. Forms a cluster with proteins L14 and L19. Methylated by PrmB.

In terms of biological role, one of the primary rRNA binding proteins, it binds directly near the 3'-end of the 23S rRNA, where it nucleates assembly of the 50S subunit. The protein is Large ribosomal subunit protein uL3 of Cupriavidus metallidurans (strain ATCC 43123 / DSM 2839 / NBRC 102507 / CH34) (Ralstonia metallidurans).